A 365-amino-acid polypeptide reads, in one-letter code: 7-methylxanthine methyltransferase PCS1 (365 aa).

Y19 provides a ligand contact to S-adenosyl-L-homocysteine. T26 is a binding site for caffeine. C62, N67, D99, L100, S134, and F135 together coordinate S-adenosyl-L-homocysteine. Residues Y152, H155, and W156 each contribute to the caffeine site. Position 173 (N173) interacts with Mg(2+). H221 contacts caffeine. 3 residues coordinate Mg(2+): D259, F261, and N262. Caffeine is bound at residue F317.

The protein belongs to the methyltransferase superfamily. Type-7 methyltransferase family. Mg(2+) serves as cofactor.

The catalysed reaction is 1,7-dimethylxanthine + S-adenosyl-L-methionine = caffeine + S-adenosyl-L-homocysteine + H(+). The enzyme catalyses 7-methylxanthine + S-adenosyl-L-methionine = theobromine + S-adenosyl-L-homocysteine + H(+). It functions in the pathway alkaloid biosynthesis. Involved in the biosynthesis of caffeine. Catalyzes the conversion of 7-methylxanthine (7mX) to theobromine, and, to some extent, the conversion of paraxanthine to caffeine, but seems not able to convert theobromine to caffeine. The polypeptide is 7-methylxanthine methyltransferase PCS1 (Camellia ptilophylla (Cocoa tea)).